We begin with the raw amino-acid sequence, 343 residues long: uncharacterized protein (343 aa).

Disordered regions lie at residues Met-1–Thr-25, Lys-62–Asp-119, and Asn-169–Ser-188. Basic residues predominate over residues Lys-62–Gln-71. The span at Asn-72–Glu-81 shows a compositional bias: basic and acidic residues. The span at Asn-83 to Asn-107 shows a compositional bias: acidic residues.

This is an uncharacterized protein from Acanthamoeba polyphaga (Amoeba).